Here is a 351-residue protein sequence, read N- to C-terminus: Uroporphyrinogen decarboxylase (351 aa).

Residues 25–29, F43, D74, Y151, S206, and H325 each bind substrate; that span reads RQAGR.

This sequence belongs to the uroporphyrinogen decarboxylase family. Homodimer.

It is found in the cytoplasm. It carries out the reaction uroporphyrinogen III + 4 H(+) = coproporphyrinogen III + 4 CO2. It participates in porphyrin-containing compound metabolism; protoporphyrin-IX biosynthesis; coproporphyrinogen-III from 5-aminolevulinate: step 4/4. Its function is as follows. Catalyzes the decarboxylation of four acetate groups of uroporphyrinogen-III to yield coproporphyrinogen-III. The polypeptide is Uroporphyrinogen decarboxylase (Chlorobaculum tepidum (strain ATCC 49652 / DSM 12025 / NBRC 103806 / TLS) (Chlorobium tepidum)).